The primary structure comprises 472 residues: Divinyl ether synthase CYP74 (472 aa).

Position 425 (Cys-425) interacts with heme.

This sequence belongs to the cytochrome P450 family. Heme is required as a cofactor. In terms of tissue distribution, expressed mainly in bulbs, and at lower levels in roots.

The enzyme catalyses (13S)-hydroperoxy-(9Z,11E)-octadecadienoate = etheroleate + H2O. It carries out the reaction (13S)-hydroperoxy-(9Z,11E,15Z)-octadecatrienoate = etherolenate + H2O. The catalysed reaction is (9S)-hydroperoxy-(10E,12Z)-octadecadienoate = colneleate + H2O. It catalyses the reaction (9S)-hydroperoxy-(10E,12Z,15Z)-octadecatrienoate = colnelenate + H2O. The protein operates within lipid metabolism; oxylipin biosynthesis. In terms of biological role, divinyl ether synthase involved in oxylipin biosynthesis. Catalyzes the conversion of (13S)-hydroperoxy-(9Z,11E)-octadecadienoate (13-HPOD) to etheroleate and (13S)-hydroperoxy-(9Z,11E,15Z)-octadecatrienoate (13-HPOT) to etherolenate. Catalyzes the conversion of (9S)-hydroperoxy-(10E,12Z)-octadecadienoate (9-HPOD) to colneleate and (9S)-hydroperoxy-(10E,12Z,15Z)-octadecatrienoate (9-HPOT) colnelenate. The sequence is that of Divinyl ether synthase CYP74 from Allium sativum (Garlic).